Here is a 156-residue protein sequence, read N- to C-terminus: C-type lectin lectoxin-Lei1 (156 aa).

The first 23 residues, 1–23 (MRRFLFLSLGVLVVAFSLNGIGA), serve as a signal peptide directing secretion. 3 disulfides stabilise this stretch: Cys-27–Cys-38, Cys-55–Cys-154, and Cys-129–Cys-146. The region spanning 34–155 (FDRFCYKVIK…CESRNIFICK (122 aa)) is the C-type lectin domain. 2 N-linked (GlcNAc...) asparagine glycosylation sites follow: Asn-60 and Asn-99. A Sugar-binding motif is present at residues 119 to 121 (KRN). Asn-142 contacts Ca(2+).

The protein belongs to the true venom lectin family. In terms of tissue distribution, expressed by the venom gland.

Its subcellular location is the secreted. In terms of biological role, lectin which recognizes specific carbohydrate structures and agglutinates a variety of animal cells by binding to cell-surface glycoproteins and glycolipids. May be a calcium-dependent lectin. The polypeptide is C-type lectin lectoxin-Lei1 (Leioheterodon madagascariensis (Malagasy giant hognose snake)).